Consider the following 249-residue polypeptide: Receptor-transporting protein 4 (249 aa).

The Cytoplasmic portion of the chain corresponds to 1 to 227 (MLFPDDFSTW…QGCREPPQRE (227 aa)). Residues 50–162 (TVLGRFQCSR…DTRNCEACSL (113 aa)) form a 3CxxC-type zinc finger. The disordered stretch occupies residues 173–208 (KVKPPRSPSPLPKSSSPSKSCPPPPQTRNTDFGNKT). The span at 199–208 (TRNTDFGNKT) shows a compositional bias: polar residues. Residues 228–248 (IEPPLFLFLSIAAFALFSLFT) traverse the membrane as a helical segment.

This sequence belongs to the TMEM7 family. In terms of assembly, interacts with TASR16. Interacts with OPRD1 and OPRM1; the interaction promotes cell surface localization of the OPDR1-OPRM1 heterodimer. In terms of tissue distribution, expressed at low levels in olfactory neurons. Upon viral infection, highly expressed in brain and different cells of nervous tissue.

It is found in the membrane. The protein resides in the cytoplasm. Chaperone protein that facilitates the trafficking and functional cell surface expression of some G-protein coupled receptors (GPCRs). Promotes functional expression of the bitter taste receptor TAS2R16. Also promotes functional expression of the opioid receptor heterodimer OPRD1-OPRM1. In addition, acts as a potent IFN-inducible suppressor of pathogens including lyssavirus rabies, influenza A or yellow fever virus. Mechanistically, associates with the viral replicase, binds viral RNA, and thereby suppresses viral genome amplification that replicates at the endoplasmic reticulum. In addition, restores antiviral signaling by interacting with and sequestering influenza virus protein NS1. This Mus musculus (Mouse) protein is Receptor-transporting protein 4 (Rtp4).